A 219-amino-acid polypeptide reads, in one-letter code: Carbonic anhydrase 1 (219 aa).

The Zn(2+) site is built by Cys39, Asp41, His98, and Cys101.

Belongs to the beta-class carbonic anhydrase family. In terms of assembly, oligomer. Zn(2+) is required as a cofactor.

The catalysed reaction is hydrogencarbonate + H(+) = CO2 + H2O. Reversible hydration of carbon dioxide. Carbon dioxide formed in the bicarbonate-dependent decomposition of cyanate by cyanase (CynS) diffuses out of the cell faster than it would be hydrated to bicarbonate, so the apparent function of this enzyme is to catalyze the hydration of carbon dioxide and thus prevent depletion of cellular bicarbonate. This is Carbonic anhydrase 1 (cynT) from Escherichia coli O157:H7.